A 1735-amino-acid chain; its full sequence is Inactive tyrosine-protein kinase PEAK1 (1735 aa).

2 disordered regions span residues 26-66 (LHQL…PPVA) and 111-145 (LSQK…KISN). Polar residues-rich tracts occupy residues 111–121 (LSQKPLNNNSE) and 130–145 (DPQQ…KISN). S282 is subject to Phosphoserine. Disordered stretches follow at residues 324-410 (NSGV…SVKV), 491-514 (GRPK…LTPG), and 537-580 (SPRQ…SKTI). A compositionally biased stretch (low complexity) spans 325–336 (SGVSYGQGSVQS). The span at 337–365 (TISSDCTSPGSSFTEESRSETASSLSQKV) shows a compositional bias: polar residues. A compositionally biased stretch (low complexity) spans 367 to 378 (NGGISPGNPGNS). Residues 384-393 (TESNFESPPG) are compositionally biased toward polar residues. Positions 498 to 509 (SSSTPNSPVTSP) are enriched in low complexity. Phosphoserine occurs at positions 537, 569, and 584. Residues 566 to 580 (APTSPTATNISSKTI) are compositionally biased toward polar residues. 2 positions are modified to phosphotyrosine: Y632 and Y638. A Phosphoserine modification is found at S645. The residue at position 662 (Y662) is a Phosphotyrosine. 3 disordered regions span residues 663-762 (EEIE…REKA), 800-919 (PDAD…AADA), and 1019-1097 (RNSE…SATY). Composition is skewed to polar residues over residues 704–735 (QEFN…QRPT), 745–757 (AQGS…SSNS), and 819–839 (LFTS…SPTA). Phosphoserine occurs at positions 824 and 825. Positions 847–863 (TKPVTSPPSKLVTSAQS) are enriched in low complexity. The segment covering 864-873 (EPPPPFPPPR) has biased composition (pro residues). Positions 879-901 (YHASNLLQRHFTNWTKPTSPTRS) are enriched in polar residues. S897 bears the Phosphoserine mark. Composition is skewed to basic and acidic residues over residues 902-919 (TEAE…AADA) and 1037-1055 (ACSR…RDPR). Positions 1076-1086 (EREEEKDDTLD) are enriched in acidic residues. Residue T1141 is modified to Phosphothreonine. Y1177 is subject to Phosphotyrosine. Positions 1274–1300 (EVVGKLRSLHTDALKRLAVKCEDLFMA) are required for homodimerization. The region spanning 1302–1664 (QKDQLRFGVD…LLWGPREDLF (363 aa)) is the Protein kinase domain. S1363 bears the Phosphoserine mark. The tract at residues 1394–1445 (WEDPDAPEKAEDGTEDSEEEGKAETLGGNPEPCSETEPSQKENQRVTNRKQR) is disordered. Residues 1659–1732 (PREDLFQIFT…DSLSYIVKIL (74 aa)) form a required for homodimerization region.

The protein belongs to the protein kinase superfamily. As to quaternary structure, homodimer. Interacts with BCAR1 and CRK. Interacts with PRAG1. Interacts (when phosphorylated at Tyr-1177) with SHC1 (via PID domain). Found in a complex with PPP1CA, PPP1CC and SHC1. Interacts (when phosphorylated at Tyr-632) with tensin TNS3 (when phosphorylated on the SH2 domain); TNS3 also interacts with integrins ITGB1, ITGB3 and ITGB5 and mediates their association with PEAK1. In terms of processing, phosphorylated on tyrosine in a CSK-dependent manner in response to adhesion to fibronectin and to EGF stimulation. Phosphorylation at Tyr-662 by a Src family kinase controls subcellular localization to focal adhesion and focal adhesion dynamics. Phosphorylation at Tyr-1177 is essential for binding to SHC1. Phosphorylation at Tyr-632 promotes interaction with tensin TNS3.

Its subcellular location is the cytoplasm. It is found in the cytoskeleton. The protein localises to the cell junction. The protein resides in the focal adhesion. Its function is as follows. Probable catalytically inactive kinase. Scaffolding protein that regulates the cytoskeleton to control cell spreading and migration by modulating focal adhesion dynamics. Acts as a scaffold for mediating EGFR signaling. In Mus musculus (Mouse), this protein is Inactive tyrosine-protein kinase PEAK1 (Peak1).